Reading from the N-terminus, the 85-residue chain is MATKKAGGSTRNGRDSEAKRLGVKRFGGESVLAGSIIVRQRGTKFHAGSNVGMGKDHTLFATADGKVKFEVKGEKNRKYVSIIAE.

Positions 1–20 (MATKKAGGSTRNGRDSEAKR) are disordered.

Belongs to the bacterial ribosomal protein bL27 family.

This Glaesserella parasuis serovar 5 (strain SH0165) (Haemophilus parasuis) protein is Large ribosomal subunit protein bL27.